A 145-amino-acid chain; its full sequence is 6-pyruvoyl tetrahydrobiopterin synthase (145 aa).

At S19 the chain carries Phosphoserine; by PKG. H24 is a binding site for Zn(2+). S28 carries the post-translational modification Phosphoserine. Catalysis depends on C43, which acts as the Proton acceptor. 2 residues coordinate Zn(2+): H49 and H51. H90 serves as the catalytic Charge relay system. Y128 carries the post-translational modification Phosphotyrosine. Catalysis depends on E134, which acts as the Charge relay system.

The protein belongs to the PTPS family. In terms of assembly, homohexamer formed of two homotrimers in a head to head fashion. Zn(2+) is required as a cofactor. Post-translationally, phosphorylation of Ser-19 is required for maximal enzyme activity.

It catalyses the reaction 7,8-dihydroneopterin 3'-triphosphate = 6-pyruvoyl-5,6,7,8-tetrahydropterin + triphosphate + H(+). It participates in cofactor biosynthesis; tetrahydrobiopterin biosynthesis; tetrahydrobiopterin from 7,8-dihydroneopterin triphosphate: step 1/3. Involved in the biosynthesis of tetrahydrobiopterin, an essential cofactor of aromatic amino acid hydroxylases. Catalyzes the transformation of 7,8-dihydroneopterin triphosphate into 6-pyruvoyl tetrahydropterin. The protein is 6-pyruvoyl tetrahydrobiopterin synthase (PTS) of Homo sapiens (Human).